We begin with the raw amino-acid sequence, 244 residues long: Phosphoadenosine 5'-phosphosulfate reductase (244 aa).

Cysteine 239 serves as the catalytic Nucleophile; cysteine thiosulfonate intermediate.

The protein belongs to the PAPS reductase family. CysH subfamily.

Its subcellular location is the cytoplasm. The catalysed reaction is [thioredoxin]-disulfide + sulfite + adenosine 3',5'-bisphosphate + 2 H(+) = [thioredoxin]-dithiol + 3'-phosphoadenylyl sulfate. Its pathway is sulfur metabolism; hydrogen sulfide biosynthesis; sulfite from sulfate: step 3/3. Catalyzes the formation of sulfite from phosphoadenosine 5'-phosphosulfate (PAPS) using thioredoxin as an electron donor. The chain is Phosphoadenosine 5'-phosphosulfate reductase from Yersinia pseudotuberculosis serotype O:1b (strain IP 31758).